The chain runs to 905 residues: Translation initiation factor IF-2 (905 aa).

3 disordered regions span residues 52-84 (QSHGQKEKRRISLKSKTTSTARVTGSSGKSKSV), 116-230 (AKKR…QKKT), and 269-318 (FEKE…FEKP). Residues 65–84 (KSKTTSTARVTGSSGKSKSV) are compositionally biased toward polar residues. Positions 116 to 138 (AKKRAEEEAKKREQVKKEAEERQ) are enriched in basic and acidic residues. The segment covering 165–178 (VVVKKGSKAAAAAK) has biased composition (low complexity). Basic and acidic residues-rich tracts occupy residues 190 to 230 (PKVE…QKKT) and 269 to 278 (FEKERREIKR). A tr-type G domain is found at 406–575 (TRPPVVTIMG…NLQAELMELE (170 aa)). The segment at 415-422 (GHVDHGKT) is G1. 415–422 (GHVDHGKT) lines the GTP pocket. The tract at residues 440 to 444 (GITQH) is G2. The segment at 461 to 464 (DTPG) is G3. Residues 461 to 465 (DTPGH) and 515 to 518 (NKMD) each bind GTP. The segment at 515 to 518 (NKMD) is G4. Residues 551–553 (SAK) are G5.

It belongs to the TRAFAC class translation factor GTPase superfamily. Classic translation factor GTPase family. IF-2 subfamily.

It is found in the cytoplasm. In terms of biological role, one of the essential components for the initiation of protein synthesis. Protects formylmethionyl-tRNA from spontaneous hydrolysis and promotes its binding to the 30S ribosomal subunits. Also involved in the hydrolysis of GTP during the formation of the 70S ribosomal complex. The sequence is that of Translation initiation factor IF-2 from Psychrobacter sp. (strain PRwf-1).